The sequence spans 348 residues: Ubiquitin thioesterase OTU1 (348 aa).

The span at 1–11 (MFGPAKGRHFG) shows a compositional bias: basic residues. Residues 1–39 (MFGPAKGRHFGVHPAPGFPGGVSQQAAGTKAGPAGAWPV) are disordered. A UBX-like region spans residues 50-128 (RCKAKDGTHV…IIEEDQTRPR (79 aa)). The OTU domain maps to 149–274 (LTRTVVPADN…GIHYDPLQRN (126 aa)). The interval 154 to 160 (VPADNSC) is cys-loop. Asp-157 is a catalytic residue. Residue Cys-160 is the Nucleophile of the active site. A variable-loop region spans residues 213–223 (IKRDDTWGGAI). Residues 263 to 267 (YDGIH) form a his-loop region. Residue Ile-266 participates in substrate binding. His-267 is a catalytic residue. An S2 site region spans residues 291–296 (DIVLVQ). The segment at 318-342 (LRCMVCQKGLTGQAEAREHAKETGH) adopts a C2H2-type zinc-finger fold. His-342 is an active-site residue.

Interacts with VCP; the interaction is direct. Interacts with FAF2/UBXD8. Interacts with DERL1; however interaction is dependent on the UBAX-like region, suggesting that it may be indirect. Interacts with PLAA, UBXN6 and VCP; may form a complex involved in macroautophagy.

It localises to the cytoplasm. It catalyses the reaction Thiol-dependent hydrolysis of ester, thioester, amide, peptide and isopeptide bonds formed by the C-terminal Gly of ubiquitin (a 76-residue protein attached to proteins as an intracellular targeting signal).. Hydrolase that can remove conjugated ubiquitin from proteins and participates in endoplasmic reticulum-associated degradation (ERAD) for misfolded lumenal proteins. May act by triming the ubiquitin chain on the associated substrate to facilitate their threading through the VCP/p97 pore. Ubiquitin moieties on substrates may present a steric impediment to the threading process when the substrate is transferred to the VCP pore and threaded through VCP's axial channel. Mediates deubiquitination of 'Lys-27'-, 'Lys-29'- and 'Lys-33'-linked polyubiquitin chains. Also able to hydrolyze 'Lys-11'-linked ubiquitin chains. Cleaves both polyubiquitin and di-ubiquitin. May play a role in macroautophagy, regulating for instance the clearance of damaged lysosomes. May recruit PLAA, UBXN6 and VCP to damaged lysosome membranes decorated with K48-linked ubiquitin chains and remove these chains allowing autophagosome formation. The sequence is that of Ubiquitin thioesterase OTU1 (YOD1) from Homo sapiens (Human).